Reading from the N-terminus, the 95-residue chain is Opiscorpine-3 (95 aa).

Residues 1–19 form the signal peptide; sequence MNNKLTALIFLGLLAIASC. The 41-residue stretch at 55–95 folds into the BetaSPN-type CS-alpha/beta domain; sequence EFMCVANVDMTKSCDTHCQKASGEKGYCHGTKCKCGVPLSY. Intrachain disulfides connect Cys-58–Cys-82, Cys-68–Cys-87, and Cys-72–Cys-89.

It belongs to the long chain scorpion toxin family. Class 3 subfamily. Expressed by the venom gland.

The protein localises to the secreted. Functionally, has antimicrobial activity against yeasts and bacteria. The sequence is that of Opiscorpine-3 from Opistophthalmus carinatus (African yellow leg scorpion).